A 411-amino-acid polypeptide reads, in one-letter code: Adherens junction-associated protein 1 (411 aa).

A signal peptide spans 1–43 (MWIQQLLGLSSMPIRWPGRSLGSHLWILIAMLQLAVDFPSCDS). The Extracellular portion of the chain corresponds to 44 to 283 (LGPGPEFRLL…GETSGLAVHQ (240 aa)). Composition is skewed to low complexity over residues 62 to 76 (LWSL…LPTP), 121 to 145 (PPAA…AGAA), and 247 to 264 (TPVG…SNNG). Disordered regions lie at residues 62–156 (LWSL…RGRR) and 242–270 (DPWK…IQPP). A helical membrane pass occupies residues 284-304 (IITITVSLIMVIAALITTLVL). A targeting signals region spans residues 304-411 (LKNCCAPSGH…VSEKWFEISC (108 aa)). The Cytoplasmic portion of the chain corresponds to 305–411 (KNCCAPSGHT…VSEKWFEISC (107 aa)).

As to quaternary structure, forms a complex with CDH1 and CTNNB1; interacts directly with CTNNB1. Interacts with AP1M2 and with isoform 2 of BSG/CD147.

Its subcellular location is the basolateral cell membrane. It localises to the apical cell membrane. The protein localises to the cell junction. It is found in the adherens junction. Plays a role in cell adhesion and cell migration. This chain is Adherens junction-associated protein 1 (Ajap1), found in Rattus norvegicus (Rat).